Consider the following 958-residue polypeptide: Valine--tRNA ligase (958 aa).

Positions 42 to 52 (PNVTGSLHMGH) match the 'HIGH' region motif. A 'KMSKS' region motif is present at residues 554 to 558 (KMSKS). ATP is bound at residue K557. The stretch at 887–956 (LVDVAAEMAR…TEQKAEFAKL (70 aa)) forms a coiled coil.

This sequence belongs to the class-I aminoacyl-tRNA synthetase family. ValS type 1 subfamily. Monomer.

The protein resides in the cytoplasm. It catalyses the reaction tRNA(Val) + L-valine + ATP = L-valyl-tRNA(Val) + AMP + diphosphate. Its function is as follows. Catalyzes the attachment of valine to tRNA(Val). As ValRS can inadvertently accommodate and process structurally similar amino acids such as threonine, to avoid such errors, it has a 'posttransfer' editing activity that hydrolyzes mischarged Thr-tRNA(Val) in a tRNA-dependent manner. The polypeptide is Valine--tRNA ligase (Shewanella oneidensis (strain ATCC 700550 / JCM 31522 / CIP 106686 / LMG 19005 / NCIMB 14063 / MR-1)).